Here is a 763-residue protein sequence, read N- to C-terminus: Putative alpha-1,3-mannosyltransferase MNN15 (763 aa).

The Cytoplasmic segment spans residues 1–7 (MRFTLKK). Residues 8 to 28 (IFFVFLTLLIISIGYLLLQSV) form a helical membrane-spanning segment. Residues 29–763 (DLQRIRELLH…KDATTVRLRI (735 aa)) are Lumenal-facing. N71, N157, and N169 each carry an N-linked (GlcNAc...) asparagine glycan. The tract at residues 617 to 659 (LVPPDLPNQREPGSPPDTKPEMEFRKSWKSRKKDTDEINEKLP) is disordered. Residues 649-659 (KDTDEINEKLP) are compositionally biased toward basic and acidic residues.

It belongs to the MNN1/MNT family.

It is found in the golgi apparatus membrane. Its pathway is protein modification; protein glycosylation. Responsible for addition of the terminal mannose residues to the outer chain of core N-linked polysaccharides and to O-linked mannotriose. Implicated in late Golgi modifications. This Candida albicans (strain SC5314 / ATCC MYA-2876) (Yeast) protein is Putative alpha-1,3-mannosyltransferase MNN15 (MNN15).